Consider the following 173-residue polypeptide: Ribonuclease H (173 aa).

The interval 1-20 (MKATSKAKTHPPGATAAKDP) is disordered. The 143-residue stretch at 20-162 (PQKQVIIYTD…CDVLSKEAAG (143 aa)) folds into the RNase H type-1 domain. Residues D29, E67, D89, and D154 each coordinate Mg(2+).

It belongs to the RNase H family. Monomer. The cofactor is Mg(2+).

Its subcellular location is the cytoplasm. It carries out the reaction Endonucleolytic cleavage to 5'-phosphomonoester.. In terms of biological role, endonuclease that specifically degrades the RNA of RNA-DNA hybrids. The chain is Ribonuclease H from Syntrophus aciditrophicus (strain SB).